The chain runs to 122 residues: uncharacterized protein (122 aa).

The N-terminal stretch at 1 to 17 is a signal peptide; it reads MKYSSIFSMLSFFILFA.

This is an uncharacterized protein from Escherichia coli (strain K12).